The primary structure comprises 438 residues: Actin-like protein 7A (438 aa).

The tract at residues 36 to 56 is required for interaction with TES; sequence ASLKDGPAKRAVWVRRDHSEP.

Belongs to the actin family. In terms of assembly, interacts (via N-terminus) with TES (via LIM domain 2). Heterodimer with TES; the heterodimer interacts with ENAH to form a heterotrimer. Interacts with ACTL9. Interacts with CYLC1; the interaction may be relevant for proper acrosome attachment to the nuclear envelope.

Its subcellular location is the cytoplasm. It is found in the cytoskeleton. The protein resides in the golgi apparatus. It localises to the nucleus. Its function is as follows. Essential for normal spermatogenesis and male fertility. Required for normal sperm head morphology, acroplaxome formation, acrosome attachment, and acrosome granule stability. May anchor and stabilize acrosomal adherence to the acroplaxome at least in part by facilitating the presence of F-actin in the subacrosomal space. May play an important role in formation and fusion of Golgi-derived vesicles during acrosome biogenesis. This chain is Actin-like protein 7A (ACTL7A), found in Bos taurus (Bovine).